Here is a 568-residue protein sequence, read N- to C-terminus: Small ribosomal subunit protein bS1 (568 aa).

6 consecutive S1 motif domains span residues 27 to 93 (GYVA…LSRE), 111 to 177 (GERV…VSRR), 198 to 266 (GQVV…LGMK), 283 to 353 (GKKI…LGLK), 370 to 440 (GTEV…LGIK), and 459 to 530 (NAVV…LSIK).

This sequence belongs to the bacterial ribosomal protein bS1 family.

Binds mRNA; thus facilitating recognition of the initiation point. It is needed to translate mRNA with a short Shine-Dalgarno (SD) purine-rich sequence. The protein is Small ribosomal subunit protein bS1 (rpsA) of Rhizobium meliloti (strain 1021) (Ensifer meliloti).